The sequence spans 156 residues: MSRRNAAEKRPVLPDPQFNNRLATMMVARLMKHGKKSTAQKILSQAFGLINERTGGDPIELFETAIKNATPLVEVRARRVGGATYQVPMEVRQERGTAMALRWLVNFSRSRNGRSMAHKLAGELMDAANEAGNAVRKREETHKMAEANKAFAHYRY.

Belongs to the universal ribosomal protein uS7 family. Part of the 30S ribosomal subunit. Contacts proteins S9 and S11.

Functionally, one of the primary rRNA binding proteins, it binds directly to 16S rRNA where it nucleates assembly of the head domain of the 30S subunit. Is located at the subunit interface close to the decoding center, probably blocks exit of the E-site tRNA. The protein is Small ribosomal subunit protein uS7 of Prochlorococcus marinus (strain SARG / CCMP1375 / SS120).